The sequence spans 327 residues: Phenylalanine--tRNA ligase alpha subunit (327 aa).

Glu252 lines the Mg(2+) pocket.

This sequence belongs to the class-II aminoacyl-tRNA synthetase family. Phe-tRNA synthetase alpha subunit type 1 subfamily. Tetramer of two alpha and two beta subunits. Requires Mg(2+) as cofactor.

The protein resides in the cytoplasm. The enzyme catalyses tRNA(Phe) + L-phenylalanine + ATP = L-phenylalanyl-tRNA(Phe) + AMP + diphosphate + H(+). In Shewanella baltica (strain OS223), this protein is Phenylalanine--tRNA ligase alpha subunit.